A 175-amino-acid chain; its full sequence is Type-2 ice-structuring protein (175 aa).

The first 16 residues, 1 to 16, serve as a signal peptide directing secretion; that stretch reads MLAALLVCAMVALTRA. A propeptide spanning residues 17 to 33 is cleaved from the precursor; the sequence is ANGDTGKEAVMTGSSGK. Residues 36 to 163 form the C-type lectin domain; it reads TECPTDWKMF…LHASVCAKPA (128 aa). 5 disulfides stabilise this stretch: C38–C49, C66–C159, C103–C134, C123–C145, and C135–C151.

It is found in the secreted. In terms of biological role, antifreeze proteins lower the blood freezing point. This is Type-2 ice-structuring protein from Osmerus mordax (Rainbow smelt).